A 473-amino-acid polypeptide reads, in one-letter code: UDP-glycosyltransferase 71B1 (473 aa).

His-15 serves as the catalytic Proton acceptor. Residue His-15 participates in an anthocyanidin binding. The Charge relay role is filled by Asp-110. UDP-alpha-D-glucose is bound by residues Thr-132, Ala-342, Gln-344, His-359, Trp-362, Asn-363, Ser-364, and Glu-367. Ala-382 contacts an anthocyanidin. Residues Glu-383 and Gln-384 each contribute to the UDP-alpha-D-glucose site.

This sequence belongs to the UDP-glycosyltransferase family.

The enzyme catalyses a flavonol + UDP-alpha-D-glucose = a flavonol 3-O-beta-D-glucoside + UDP + H(+). Functionally, possesses quercetin 3-O-glucosyltransferase activity in vitro. Also active in vitro on benzoates and benzoate derivatives. The polypeptide is UDP-glycosyltransferase 71B1 (UGT71B1) (Arabidopsis thaliana (Mouse-ear cress)).